The following is a 330-amino-acid chain: D-lactate dehydrogenase (330 aa).

NAD(+) is bound by residues 156–157 (RI), Asp-176, 206–207 (VP), 233–235 (AAR), and Asp-259. Arg-235 is a catalytic residue. Glu-264 is a catalytic residue. The active-site Proton donor is His-296.

It belongs to the D-isomer specific 2-hydroxyacid dehydrogenase family.

It carries out the reaction (R)-lactate + NAD(+) = pyruvate + NADH + H(+). This is D-lactate dehydrogenase (ldhD) from Staphylococcus aureus (strain MRSA252).